The chain runs to 699 residues: D-(-)-3-hydroxybutyrate oligomer hydrolase (699 aa).

Residues 1–33 (MTAIRGGSRRAPGLALALLGGVLLGACHGDENA) form the signal peptide. Residue Ser-311 is the Charge relay system of the active site.

It belongs to the D-(-)-3-hydroxybutyrate oligomer hydrolase family.

The protein localises to the secreted. The enzyme catalyses (3R)-hydroxybutanoate dimer + H2O = 2 (R)-3-hydroxybutanoate + H(+). It participates in lipid metabolism; butanoate metabolism. Its function is as follows. Participates in the degradation of poly-3-hydroxybutyrate (PHB). It works downstream of poly(3-hydroxybutyrate) depolymerase, hydrolyzing D(-)-3-hydroxybutyrate oligomers of various length (3HB-oligomers) into 3HB-monomers. This is D-(-)-3-hydroxybutyrate oligomer hydrolase from Burkholderia pseudomallei (strain 1106a).